The primary structure comprises 267 residues: Zein-alpha Z4 (267 aa).

The first 21 residues, 1-21 (MAAKIFCLIMLLGLSASAATA), serve as a signal peptide directing secretion.

It belongs to the zein family.

Zeins are major seed storage proteins. The sequence is that of Zein-alpha Z4 from Zea mays (Maize).